Consider the following 589-residue polypeptide: MTVLGHPRSWSCHCLPVLILLLGIGHGPRVEGVTHYKPGDPVILYVNKVGPYHNPQETYHYYQLPVCCPEKIRHKSLSLGEVLDGDRMAESLYEIRFRENVEKRILCHMQLSSAQVEQLRQAIEELYYFEFVVDDLPIRGFVGYMEESGFLPHSHKIGLWTHLDFHLEFHGDRIIFANVSVRDVKPHSLDGLRSDELLGLTHTYSVRWSETSVEHRSDRRRADDGGFFPRTLEIHWLSIINSMVLVFLLVGFVAVILMRVLRNDLARYNLDEETSSGGSSDDFDQGDNGWKIIHTDVFRFPPCRGLLCAVLGVGAQFLALGTGIIVMALLGMFNVHRHGAINSAAILLYALTCCISGYVSSHFYRQIGGERWVWNIILTTSLFSVPFFLTWSVVNSVHWANGSTQALPVTTILLLLTVWLLVGFPLTVIGGIFGKNNASPFDAPCRTKNIAREIPPQPCAISVELYYIFATVWGREQYTLYGILFFVFAILLSVGACISIALTYFQLSGEDYRWWWRSVLSVGSTGLFIFLYSVFYYARRSNMSGAVQTVEFFGYSLLTGYVFFLMLGTISFFSSLKFIRYIYVNLKMD.

The first 27 residues, 1 to 27 (MTVLGHPRSWSCHCLPVLILLLGIGHG), serve as a signal peptide directing secretion. An N-linked (GlcNAc...) asparagine glycan is attached at N178. A run of 4 helical transmembrane segments spans residues 237 to 257 (LSII…AVIL), 310 to 330 (VLGV…MALL), 339 to 359 (GAIN…SGYV), and 373 to 393 (VWNI…TWSV). N401 carries an N-linked (GlcNAc...) asparagine glycan. 3 consecutive transmembrane segments (helical) span residues 412 to 432 (ILLL…IGGI), 482 to 502 (GILF…SIAL), and 518 to 538 (SVLS…FYYA). An N-linked (GlcNAc...) asparagine glycan is attached at N542. A helical membrane pass occupies residues 552-572 (FFGYSLLTGYVFFLMLGTISF).

This sequence belongs to the nonaspanin (TM9SF) (TC 9.A.2) family.

The protein localises to the lysosome membrane. It is found in the cytoplasmic vesicle. Its subcellular location is the autophagosome membrane. Functionally, plays an essential role in autophagy. The sequence is that of Transmembrane 9 superfamily member 1 (Tm9sf1) from Rattus norvegicus (Rat).